We begin with the raw amino-acid sequence, 204 residues long: Putative uracil phosphoribosyltransferase urg2 (204 aa).

Residues R75, R100, and 126-134 (DPVMATGGT) contribute to the 5-phospho-alpha-D-ribose 1-diphosphate site. Residue Y187 participates in D-ribose 5-phosphate binding. Residues L188 and 193–195 (GDI) contribute to the uracil site. D194 lines the 5-phospho-alpha-D-ribose 1-diphosphate pocket.

Belongs to the UPRTase family. Mg(2+) is required as a cofactor.

The protein localises to the cytoplasm. The protein resides in the nucleus. It carries out the reaction UMP + diphosphate = 5-phospho-alpha-D-ribose 1-diphosphate + uracil. Its pathway is pyrimidine metabolism; UMP biosynthesis via salvage pathway; UMP from uracil: step 1/1. With respect to regulation, allosterically activated by GTP. Its function is as follows. Catalyzes the conversion of uracil and 5-phospho-alpha-D-ribose 1-diphosphate (PRPP) to UMP and diphosphate. This is Putative uracil phosphoribosyltransferase urg2 from Schizosaccharomyces pombe (strain 972 / ATCC 24843) (Fission yeast).